Reading from the N-terminus, the 878-residue chain is Ecdysone receptor (878 aa).

Disordered stretches follow at residues Met-1–Asn-27 and Gly-209–Gly-254. Residues Met-1–Leu-263 are modulating. 2 consecutive NR C4-type zinc fingers follow at residues Cys-264–Cys-284 and Cys-300–Cys-324. Residues Cys-264–Pro-336 constitute a DNA-binding region (nuclear receptor). The disordered stretch occupies residues Arg-344–Gly-374. The segment covering Gly-365–Gly-374 has biased composition (gly residues). Residues Asn-419 to Ala-654 enclose the NR LBD domain. 2 stretches are compositionally biased toward low complexity: residues Thr-698–Pro-709 and Gln-728–Pro-759. Residues Thr-698 to Pro-759 form a disordered region.

This sequence belongs to the nuclear hormone receptor family. NR1 subfamily. In terms of assembly, heterodimer of USP and ECR. Only the heterodimer is capable of high-affinity binding to ecdysone. Interacts with trr in an ecdysone-dependent manner. Upon ecdysone stimulation, interacts with Nup98. Isoform B1 predominates over isoform A in larval tissues, imaginal histoblast nests and midgut islands. Isoform A predominates over B1 in imaginal disks, and the larval prothoracic gland.

The protein localises to the nucleus. Functionally, receptor for ecdysone. Binds to ecdysone response elements (ECRES) following ecdysone-binding, and recruitment of a complex containing the histone methyltransferase trr, leads to activate transcription of target genes. This chain is Ecdysone receptor (EcR), found in Drosophila melanogaster (Fruit fly).